Here is a 576-residue protein sequence, read N- to C-terminus: Sulfite reductase [NADPH] hemoprotein beta-component (576 aa).

[4Fe-4S] cluster is bound by residues Cys439, Cys445, Cys485, and Cys489. Position 489 (Cys489) interacts with siroheme.

This sequence belongs to the nitrite and sulfite reductase 4Fe-4S domain family. Alpha(8)-beta(8). The alpha component is a flavoprotein, the beta component is a hemoprotein. Siroheme is required as a cofactor. The cofactor is [4Fe-4S] cluster.

It catalyses the reaction hydrogen sulfide + 3 NADP(+) + 3 H2O = sulfite + 3 NADPH + 4 H(+). Its pathway is sulfur metabolism; hydrogen sulfide biosynthesis; hydrogen sulfide from sulfite (NADPH route): step 1/1. In terms of biological role, component of the sulfite reductase complex that catalyzes the 6-electron reduction of sulfite to sulfide. This is one of several activities required for the biosynthesis of L-cysteine from sulfate. In Aliivibrio salmonicida (strain LFI1238) (Vibrio salmonicida (strain LFI1238)), this protein is Sulfite reductase [NADPH] hemoprotein beta-component.